The chain runs to 215 residues: Redox-sensing transcriptional repressor Rex 2 (215 aa).

Residues 15–54 (VYLRYLKMLGDSGVKRIKSREFSEMIQIPSATIRRDFSHV) constitute a DNA-binding region (H-T-H motif). NAD(+) is bound at residue 89 to 94 (GCGNLG).

This sequence belongs to the transcriptional regulatory Rex family. In terms of assembly, homodimer.

It localises to the cytoplasm. Functionally, modulates transcription in response to changes in cellular NADH/NAD(+) redox state. This Enterococcus faecalis (strain ATCC 700802 / V583) protein is Redox-sensing transcriptional repressor Rex 2.